Here is a 280-residue protein sequence, read N- to C-terminus: 2-dehydro-3-deoxyphosphooctonate aldolase (280 aa).

The protein belongs to the KdsA family.

The protein resides in the cytoplasm. It carries out the reaction D-arabinose 5-phosphate + phosphoenolpyruvate + H2O = 3-deoxy-alpha-D-manno-2-octulosonate-8-phosphate + phosphate. The protein operates within carbohydrate biosynthesis; 3-deoxy-D-manno-octulosonate biosynthesis; 3-deoxy-D-manno-octulosonate from D-ribulose 5-phosphate: step 2/3. Its pathway is bacterial outer membrane biogenesis; lipopolysaccharide biosynthesis. This chain is 2-dehydro-3-deoxyphosphooctonate aldolase, found in Nitrosococcus oceani (strain ATCC 19707 / BCRC 17464 / JCM 30415 / NCIMB 11848 / C-107).